A 157-amino-acid chain; its full sequence is D-aminoacyl-tRNA deacylase (157 aa).

The Gly-cisPro motif, important for rejection of L-amino acids motif lies at 137–138 (GP).

This sequence belongs to the DTD family. In terms of assembly, homodimer.

The protein localises to the cytoplasm. It carries out the reaction glycyl-tRNA(Ala) + H2O = tRNA(Ala) + glycine + H(+). The catalysed reaction is a D-aminoacyl-tRNA + H2O = a tRNA + a D-alpha-amino acid + H(+). Functionally, an aminoacyl-tRNA editing enzyme that deacylates mischarged D-aminoacyl-tRNAs. Also deacylates mischarged glycyl-tRNA(Ala), protecting cells against glycine mischarging by AlaRS. Acts via tRNA-based rather than protein-based catalysis; rejects L-amino acids rather than detecting D-amino acids in the active site. By recycling D-aminoacyl-tRNA to D-amino acids and free tRNA molecules, this enzyme counteracts the toxicity associated with the formation of D-aminoacyl-tRNA entities in vivo and helps enforce protein L-homochirality. The protein is D-aminoacyl-tRNA deacylase of Roseiflexus castenholzii (strain DSM 13941 / HLO8).